Reading from the N-terminus, the 188-residue chain is Putative adenylate kinase (188 aa).

G10, G12, K13, S14, and T15 together coordinate ATP. An NMP region spans residues 30–53 (HVSSFLIQNKAFSEYDELRQSYVI). The interval 103–113 (RRGWGELKIAE) is LID. Positions 104 and 142 each coordinate ATP.

It belongs to the adenylate kinase family. AK6 subfamily. As to quaternary structure, interacts with uS11. Not a structural component of 40S pre-ribosomes, but transiently interacts with them by binding to uS11.

It carries out the reaction AMP + ATP = 2 ADP. The enzyme catalyses ATP + H2O = ADP + phosphate + H(+). In terms of biological role, broad-specificity nucleoside monophosphate (NMP) kinase that catalyzes the reversible transfer of the terminal phosphate group between nucleoside triphosphates and monophosphates. Also has ATPase activity. Involved in the late maturation steps of the 30S ribosomal particles, specifically 16S rRNA maturation. While NMP activity is not required for ribosome maturation, ATPase activity is. Associates transiently with small ribosomal subunit protein uS11. ATP hydrolysis breaks the interaction with uS11. May temporarily remove uS11 from the ribosome to enable a conformational change of the ribosomal RNA that is needed for the final maturation step of the small ribosomal subunit. This is Putative adenylate kinase from Sulfurisphaera tokodaii (strain DSM 16993 / JCM 10545 / NBRC 100140 / 7) (Sulfolobus tokodaii).